The sequence spans 322 residues: Aspartate carbamoyltransferase catalytic subunit (322 aa).

The carbamoyl phosphate site is built by Arg65 and Thr66. Lys93 provides a ligand contact to L-aspartate. The carbamoyl phosphate site is built by Arg115, His143, and Gln146. L-aspartate contacts are provided by Arg176 and Arg230. Gly271 and Pro272 together coordinate carbamoyl phosphate.

It belongs to the aspartate/ornithine carbamoyltransferase superfamily. ATCase family. Heterododecamer (2C3:3R2) of six catalytic PyrB chains organized as two trimers (C3), and six regulatory PyrI chains organized as three dimers (R2).

The catalysed reaction is carbamoyl phosphate + L-aspartate = N-carbamoyl-L-aspartate + phosphate + H(+). It participates in pyrimidine metabolism; UMP biosynthesis via de novo pathway; (S)-dihydroorotate from bicarbonate: step 2/3. Its function is as follows. Catalyzes the condensation of carbamoyl phosphate and aspartate to form carbamoyl aspartate and inorganic phosphate, the committed step in the de novo pyrimidine nucleotide biosynthesis pathway. The protein is Aspartate carbamoyltransferase catalytic subunit of Brucella abortus (strain S19).